The primary structure comprises 155 residues: Protein FAM162A (155 aa).

Positions 77-103 (RFKKEEEIPETISFEMLDAAKNKLRVK) are required for proapoptotic activity. The helical transmembrane segment at 104-121 (VSYLMIALTVAGCIYMVI) threads the bilayer.

The protein belongs to the UPF0389 family. In terms of assembly, interacts with HSP90AB1; HSP90AB1 is essential for FAM162A mitochondrial localization and pro-apoptotic activity. Interacts with VDAC2; the interaction is probably involved in inducing mitochondrial permeability transition.

It is found in the mitochondrion membrane. Proposed to be involved in regulation of apoptosis; the exact mechanism may differ between cell types/tissues. May be involved in hypoxia-induced cell death of transformed cells implicating cytochrome C release and caspase activation (such as CASP9) and inducing mitochondrial permeability transition. May be involved in hypoxia-induced cell death of neuronal cells probably by promoting release of AIFM1 from mitochondria to cytoplasm and its translocation to the nucleus; however, the involvement of caspases has been reported conflictingly. The protein is Protein FAM162A (Fam162a) of Mus musculus (Mouse).